The following is a 166-amino-acid chain: Lipoprotein signal peptidase (166 aa).

Transmembrane regions (helical) follow at residues 11–31, 42–62, 67–87, and 90–110; these read VWLW…TLVV, LLPV…SFLS, WQRW…VWWL, and LPAT…GAIG. Catalysis depends on residues Asp-123 and Asp-141. A helical membrane pass occupies residues 133–153; the sequence is HFPVFNVADCAICIGAALLLF.

The protein belongs to the peptidase A8 family.

It is found in the cell inner membrane. The enzyme catalyses Release of signal peptides from bacterial membrane prolipoproteins. Hydrolyzes -Xaa-Yaa-Zaa-|-(S,diacylglyceryl)Cys-, in which Xaa is hydrophobic (preferably Leu), and Yaa (Ala or Ser) and Zaa (Gly or Ala) have small, neutral side chains.. It participates in protein modification; lipoprotein biosynthesis (signal peptide cleavage). This protein specifically catalyzes the removal of signal peptides from prolipoproteins. In Pseudoalteromonas translucida (strain TAC 125), this protein is Lipoprotein signal peptidase.